Reading from the N-terminus, the 147-residue chain is Urease accessory protein UreE (147 aa).

Belongs to the UreE family.

The protein resides in the cytoplasm. Functionally, involved in urease metallocenter assembly. Binds nickel. Probably functions as a nickel donor during metallocenter assembly. The sequence is that of Urease accessory protein UreE from Nostoc sp. (strain PCC 7120 / SAG 25.82 / UTEX 2576).